A 173-amino-acid polypeptide reads, in one-letter code: Cytochrome c-type biogenesis protein CcmE (173 aa).

The Cytoplasmic segment spans residues 1 to 8 (MMSRKKRR). The chain crosses the membrane as a helical; Signal-anchor for type II membrane protein span at residues 9-29 (LWIVIACGIGLSTAVALMLFA). The Periplasmic segment spans residues 30 to 173 (FRSSLSFFMS…PAQIEASNNG (144 aa)). Heme is bound by residues His127 and Tyr131. A disordered region spans residues 145–173 (KWNPKFGPPPNAGAWDDKSPAQIEASNNG).

The protein belongs to the CcmE/CycJ family.

Its subcellular location is the cell inner membrane. Heme chaperone required for the biogenesis of c-type cytochromes. Transiently binds heme delivered by CcmC and transfers the heme to apo-cytochromes in a process facilitated by CcmF and CcmH. The polypeptide is Cytochrome c-type biogenesis protein CcmE (Acidiphilium cryptum (strain JF-5)).